A 300-amino-acid polypeptide reads, in one-letter code: UDP-N-acetylenolpyruvoylglucosamine reductase (300 aa).

The FAD-binding PCMH-type domain occupies 28 to 193; it reads KTGGPADVLA…LQATFALEKG (166 aa). Residue R172 is part of the active site. Catalysis depends on S222, which acts as the Proton donor. E292 is an active-site residue.

This sequence belongs to the MurB family. FAD is required as a cofactor.

Its subcellular location is the cytoplasm. It carries out the reaction UDP-N-acetyl-alpha-D-muramate + NADP(+) = UDP-N-acetyl-3-O-(1-carboxyvinyl)-alpha-D-glucosamine + NADPH + H(+). It functions in the pathway cell wall biogenesis; peptidoglycan biosynthesis. Its function is as follows. Cell wall formation. The protein is UDP-N-acetylenolpyruvoylglucosamine reductase of Enterococcus faecalis (strain ATCC 700802 / V583).